A 106-amino-acid chain; its full sequence is UPF0060 membrane protein AZC_0909 (106 aa).

4 helical membrane passes run Pro4–Val24, Gly27–Leu47, Ala58–Glu78, and Arg84–Pro104.

This sequence belongs to the UPF0060 family.

Its subcellular location is the cell inner membrane. This Azorhizobium caulinodans (strain ATCC 43989 / DSM 5975 / JCM 20966 / LMG 6465 / NBRC 14845 / NCIMB 13405 / ORS 571) protein is UPF0060 membrane protein AZC_0909.